A 1475-amino-acid polypeptide reads, in one-letter code: Alpha-glucan water dikinase, chloroplastic (1475 aa).

A chloroplast-targeting transit peptide spans 1 to 85 (MSNSIGRNVL…HRPVLITPRA (85 aa)). His-1077 functions as the Tele-phosphohistidine intermediate in the catalytic mechanism.

Belongs to the PEP-utilizing enzyme family. As to quaternary structure, homodimer. It depends on Mg(2+) as a cofactor.

It is found in the plastid. The protein localises to the chloroplast. The catalysed reaction is [(1-&gt;4)-alpha-D-glucosyl](n) + n ATP + n H2O = [(1-&gt;4)-6-phospho-alpha-D-glucosyl](n) + n AMP + n phosphate + 2n H(+). Functionally, mediates the incorporation of phosphate into starch-like alpha-glucan, mostly at the C-6 position of glucose units. Acts as an overall regulator of starch mobilization. Required for starch degradation, suggesting that the phosphate content of starch regulates its degradability. The chain is Alpha-glucan water dikinase, chloroplastic (R1) from Citrus reticulata (Tangerine).